The chain runs to 88 residues: ATP synthase F(0) complex subunit f, mitochondrial (88 aa).

A2 is subject to N-acetylalanine. S3 carries the phosphoserine modification. K16 bears the N6-acetyllysine mark. The chain crosses the membrane as a helical span at residues 62–79 (MVLAAYVFLNYCRSYKEL).

As to quaternary structure, component of the ATP synthase complex composed at least of ATP5F1A/subunit alpha, ATP5F1B/subunit beta, ATP5MC1/subunit c (homooctomer), MT-ATP6/subunit a, MT-ATP8/subunit 8, ATP5ME/subunit e, ATP5MF/subunit f, ATP5MG/subunit g, ATP5MK/subunit k, ATP5MJ/subunit j, ATP5F1C/subunit gamma, ATP5F1D/subunit delta, ATP5F1E/subunit epsilon, ATP5PF/subunit F6, ATP5PB/subunit b, ATP5PD/subunit d, ATP5PO/subunit OSCP. ATP synthase complex consists of a soluble F(1) head domain (subunits alpha(3) and beta(3)) - the catalytic core - and a membrane F(0) domain - the membrane proton channel (subunits c, a, 8, e, f, g, k and j). These two domains are linked by a central stalk (subunits gamma, delta, and epsilon) rotating inside the F1 region and a stationary peripheral stalk (subunits F6, b, d, and OSCP).

It is found in the mitochondrion. It localises to the mitochondrion inner membrane. Functionally, subunit f, of the mitochondrial membrane ATP synthase complex (F(1)F(0) ATP synthase or Complex V) that produces ATP from ADP in the presence of a proton gradient across the membrane which is generated by electron transport complexes of the respiratory chain. ATP synthase complex consist of a soluble F(1) head domain - the catalytic core - and a membrane F(1) domain - the membrane proton channel. These two domains are linked by a central stalk rotating inside the F(1) region and a stationary peripheral stalk. During catalysis, ATP synthesis in the catalytic domain of F(1) is coupled via a rotary mechanism of the central stalk subunits to proton translocation. In vivo, can only synthesize ATP although its ATP hydrolase activity can be activated artificially in vitro. Part of the complex F(0) domain. This chain is ATP synthase F(0) complex subunit f, mitochondrial, found in Bos taurus (Bovine).